We begin with the raw amino-acid sequence, 579 residues long: MFS-type transporter ppz2 (579 aa).

The interval 1 to 23 (MQTATALEDSANAPSPAASSQGQ) is disordered. A compositionally biased stretch (low complexity) spans 10-20 (SANAPSPAASS). Asn38 carries an N-linked (GlcNAc...) asparagine glycan. A run of 14 helical transmembrane segments spans residues 48-68 (ALIMVALCCAVFLHALDNTII), 83-103 (AAYTWIGSTYLLAVAASTMVW), 121-141 (LCFFTGSLIAALSANFAMLIA), 145-165 (IQGIGGAGVNVLANICVGDLF), 171-191 (GLYYGVIGGVWAVALSLGPVV), 203-223 (WCFYINLPLCAVVFVIIILLL), 236-256 (IAAIDWVGAALSIGSTLMILL), 269-289 (SATVICLVVFGFIGWILCFSW), 298-318 (LLPVSIFKQIPTLAVLAACFI), 336-356 (AVLGATPILSGVYLLPTAVSI), 374-394 (LTPIYIGFVLQTLGYGLFIDL), 403-423 (IIVFQIIGGLGVGFNFQAPMV), 438-460 (TSAYNFMRNVSGAISVVIGQTVF), and 516-536 (SMWIMYTAFSAAALVVCPFLG).

The protein belongs to the major facilitator superfamily. TCR/Tet family.

The protein localises to the membrane. Its function is as follows. MFS-type transporter; part of the gene cluster that mediates the biosynthesis of pyrrolopyrazines, secondary metabolites showing insecticidal activity. Probably involved in the secretion of peramine and other pyrrolopyrazines. The polypeptide is MFS-type transporter ppz2 (Metarhizium majus (strain ARSEF 297)).